The chain runs to 29 residues: Photosystem I reaction center subunit XII (29 aa).

A helical transmembrane segment spans residues 7–26 (IFVALILALFSFVLAIRLGT).

The protein belongs to the PsaM family.

The protein localises to the plastid. Its subcellular location is the chloroplast thylakoid membrane. The sequence is that of Photosystem I reaction center subunit XII from Guillardia theta (Cryptophyte).